The sequence spans 127 residues: Glycine cleavage system H protein (127 aa).

In terms of domain architecture, Lipoyl-binding spans 24–105 (TALVGITDFA…YNEGWIVKMK (82 aa)). K65 carries the post-translational modification N6-lipoyllysine.

It belongs to the GcvH family. The glycine cleavage system is composed of four proteins: P, T, L and H. Requires (R)-lipoate as cofactor.

In terms of biological role, the glycine cleavage system catalyzes the degradation of glycine. The H protein shuttles the methylamine group of glycine from the P protein to the T protein. This chain is Glycine cleavage system H protein, found in Chlorobaculum tepidum (strain ATCC 49652 / DSM 12025 / NBRC 103806 / TLS) (Chlorobium tepidum).